Reading from the N-terminus, the 107-residue chain is Phosphoribosyl-ATP pyrophosphatase (107 aa).

Belongs to the PRA-PH family.

The protein resides in the cytoplasm. It catalyses the reaction 1-(5-phospho-beta-D-ribosyl)-ATP + H2O = 1-(5-phospho-beta-D-ribosyl)-5'-AMP + diphosphate + H(+). Its pathway is amino-acid biosynthesis; L-histidine biosynthesis; L-histidine from 5-phospho-alpha-D-ribose 1-diphosphate: step 2/9. The polypeptide is Phosphoribosyl-ATP pyrophosphatase (Bacillus cytotoxicus (strain DSM 22905 / CIP 110041 / 391-98 / NVH 391-98)).